The primary structure comprises 607 residues: Transporter aclS (607 aa).

The next 12 membrane-spanning stretches (helical) occupy residues 67-87, 91-111, 152-172, 192-212, 221-241, 262-282, 317-337, 364-384, 423-443, 445-465, 500-520, and 531-551; these read LGGS…AVVL, IAAI…IGFP, LTVV…TAIL, VTTQ…PVLY, LMIG…IWSL, SLGF…SIAL, VFGQ…FGCL, AAAV…NVVD, GCYV…LASA, TFVS…GIHI, GVLP…HSIN, and HLYA…HTLV. Residues 583–607 form a disordered region; the sequence is NKDSTEEDSDRSLRRESREVVETKV. The segment covering 592-607 has biased composition (basic and acidic residues); the sequence is DRSLRRESREVVETKV.

Belongs to the purine-cytosine permease (2.A.39) family.

It is found in the membrane. Transporter; part of the gene cluster that mediates the biosynthesis of aspirochlorine (or antibiotic A30641), an unusual halogenated spiro compound with distinctive antifungal properties due to selective inhibition of protein biosynthesis, and which is also active against bacteria, viruses, and murine tumor cells. This chain is Transporter aclS, found in Aspergillus oryzae (strain ATCC 42149 / RIB 40) (Yellow koji mold).